The primary structure comprises 644 residues: DNA gyrase subunit B (644 aa).

Residues 429-543 (CEIFLVEGDS…AGYVYIAQPP (115 aa)) form the Toprim domain. Positions 435, 508, and 510 each coordinate Mg(2+).

The protein belongs to the type II topoisomerase GyrB family. Heterotetramer, composed of two GyrA and two GyrB chains. In the heterotetramer, GyrA contains the active site tyrosine that forms a transient covalent intermediate with DNA, while GyrB binds cofactors and catalyzes ATP hydrolysis. Requires Mg(2+) as cofactor. It depends on Mn(2+) as a cofactor. Ca(2+) serves as cofactor.

It localises to the cytoplasm. It carries out the reaction ATP-dependent breakage, passage and rejoining of double-stranded DNA.. Functionally, a type II topoisomerase that negatively supercoils closed circular double-stranded (ds) DNA in an ATP-dependent manner to modulate DNA topology and maintain chromosomes in an underwound state. Negative supercoiling favors strand separation, and DNA replication, transcription, recombination and repair, all of which involve strand separation. Also able to catalyze the interconversion of other topological isomers of dsDNA rings, including catenanes and knotted rings. Type II topoisomerases break and join 2 DNA strands simultaneously in an ATP-dependent manner. This is DNA gyrase subunit B from Staphylococcus aureus (strain Mu50 / ATCC 700699).